The chain runs to 505 residues: 2-methylcitrate dehydratase (505 aa).

It belongs to the PrpD family. In terms of assembly, monomer.

It carries out the reaction (2S,3S)-2-methylcitrate = 2-methyl-cis-aconitate + H2O. It catalyses the reaction citrate = D-threo-isocitrate. It functions in the pathway organic acid metabolism; propanoate degradation. The protein operates within carbohydrate metabolism; tricarboxylic acid cycle; isocitrate from oxaloacetate: step 1/2. Its function is as follows. Involved in the catabolism of short chain fatty acids (SCFA) via the tricarboxylic acid (TCA)(acetyl degradation route) and via the 2-methylcitrate cycle I (propionate degradation route). Catalyzes the dehydration of 2-methylcitrate (2-MC) to yield the cis isomer of 2-methyl-aconitate. Could also catalyze the dehydration of citrate and the hydration of cis-aconitate. The polypeptide is 2-methylcitrate dehydratase (Mycobacterium tuberculosis (strain ATCC 35801 / TMC 107 / Erdman)).